The following is a 286-amino-acid chain: ATP synthase gamma chain (286 aa).

It belongs to the ATPase gamma chain family. In terms of assembly, F-type ATPases have 2 components, CF(1) - the catalytic core - and CF(0) - the membrane proton channel. CF(1) has five subunits: alpha(3), beta(3), gamma(1), delta(1), epsilon(1). CF(0) has three main subunits: a, b and c.

The protein localises to the cell inner membrane. In terms of biological role, produces ATP from ADP in the presence of a proton gradient across the membrane. The gamma chain is believed to be important in regulating ATPase activity and the flow of protons through the CF(0) complex. In Shewanella baltica (strain OS223), this protein is ATP synthase gamma chain.